A 445-amino-acid polypeptide reads, in one-letter code: C4-dicarboxylate transport protein (445 aa).

8 helical membrane-spanning segments follow: residues Phe-17–Tyr-37, Leu-56–Met-76, Val-91–Val-111, Phe-157–Ala-177, Leu-200–Ile-220, Met-233–Val-253, Ile-319–Gly-339, and Ala-367–Val-387.

It belongs to the dicarboxylate/amino acid:cation symporter (DAACS) (TC 2.A.23) family.

Its subcellular location is the cell inner membrane. Responsible for the transport of dicarboxylates such as succinate, fumarate, and malate from the periplasm across the membrane. The chain is C4-dicarboxylate transport protein from Bordetella avium (strain 197N).